The following is a 41-amino-acid chain: U-megalopygitoxin(4)-Mo5 (41 aa).

Residues 1–23 form the signal peptide; sequence MKCSLLLVVFAAMVALFAAGTNA.

The protein belongs to the caterpillar 4 family. In terms of tissue distribution, expressed by the venom apparatus.

It localises to the secreted. In terms of biological role, probable toxin. This chain is U-megalopygitoxin(4)-Mo5, found in Megalopyge opercularis (Southern flannel moth).